The chain runs to 122 residues: Prefoldin subunit 1 (122 aa).

This sequence belongs to the prefoldin subunit beta family. As to quaternary structure, heterohexamer of two PFD-alpha type and four PFD-beta type subunits.

In terms of biological role, binds specifically to cytosolic chaperonin (c-CPN) and transfers target proteins to it. Binds to nascent polypeptide chain and promotes folding in an environment in which there are many competing pathways for nonnative proteins. The chain is Prefoldin subunit 1 (pfdn1) from Danio rerio (Zebrafish).